A 380-amino-acid chain; its full sequence is Alkanesulfonate monooxygenase (380 aa).

The protein belongs to the SsuD family. Homotetramer.

It catalyses the reaction an alkanesulfonate + FMNH2 + O2 = an aldehyde + FMN + sulfite + H2O + 2 H(+). Catalyzes the desulfonation of aliphatic sulfonates. The polypeptide is Alkanesulfonate monooxygenase (Pectobacterium atrosepticum (strain SCRI 1043 / ATCC BAA-672) (Erwinia carotovora subsp. atroseptica)).